Here is a 119-residue protein sequence, read N- to C-terminus: Thioredoxin H4 (119 aa).

Residues 2–115 (AAEEGQVIGC…LQAKIVKHTG (114 aa)) form the Thioredoxin domain. Catalysis depends on nucleophile residues Cys-40 and Cys-43. Cys-40 and Cys-43 are joined by a disulfide.

It belongs to the thioredoxin family. Plant H-type subfamily. In terms of assembly, interacts with MDH1.

It localises to the cytoplasm. Its function is as follows. Thiol-disulfide oxidoreductase probably involved in the redox regulation of a number of cytosolic enzymes. Possesses insulin disulfide bonds reducing activity. The protein is Thioredoxin H4 (TRX4) of Arabidopsis thaliana (Mouse-ear cress).